The following is a 289-amino-acid chain: tRNA pseudouridine synthase B (289 aa).

Catalysis depends on aspartate 38, which acts as the Nucleophile.

It belongs to the pseudouridine synthase TruB family. Type 1 subfamily.

It catalyses the reaction uridine(55) in tRNA = pseudouridine(55) in tRNA. Responsible for synthesis of pseudouridine from uracil-55 in the psi GC loop of transfer RNAs. In Clostridium kluyveri (strain ATCC 8527 / DSM 555 / NBRC 12016 / NCIMB 10680 / K1), this protein is tRNA pseudouridine synthase B.